The primary structure comprises 353 residues: Ferredoxin--NADP reductase 1 (353 aa).

FAD-binding residues include T14, D33, Q41, Y46, A86, F121, D289, and T330.

This sequence belongs to the ferredoxin--NADP reductase type 2 family. Homodimer. Requires FAD as cofactor.

The catalysed reaction is 2 reduced [2Fe-2S]-[ferredoxin] + NADP(+) + H(+) = 2 oxidized [2Fe-2S]-[ferredoxin] + NADPH. This Christiangramia forsetii (strain DSM 17595 / CGMCC 1.15422 / KT0803) (Gramella forsetii) protein is Ferredoxin--NADP reductase 1.